A 202-amino-acid polypeptide reads, in one-letter code: Uclacyanin-2 (202 aa).

The N-terminal stretch at 1-29 (MAMNGLSKMAVAAATALLLVLTIVPGAVA) is a signal peptide. The Phytocyanin domain occupies 30–126 (VTYTIEWTTG…GMKLAVNVVA (97 aa)). His-65 serves as a coordination point for Cu cation. N-linked (GlcNAc...) asparagine glycosylation is present at Asn-86. Residues Cys-106, His-111, and Met-118 each contribute to the Cu cation site. Positions 129-181 (AGPPATPTPPSSTPGTPTTPESPPSGGSPTPTTPTPGAGSTSPPPPPKASGAS) are disordered. Residues 141-169 (TPGTPTTPESPPSGGSPTPTTPTPGAGST) show a composition bias toward low complexity. The GPI-anchor amidated serine moiety is linked to residue Ser-178. A propeptide spans 179-202 (GASKGVMSYVLVGVSMVLGYGLWM) (removed in mature form).

Its subcellular location is the cell membrane. Functionally, probably acts as an electron carrier involved in oxygen activation and/or lignin formation. The polypeptide is Uclacyanin-2 (Arabidopsis thaliana (Mouse-ear cress)).